The primary structure comprises 122 residues: Large ribosomal subunit protein uL24 (122 aa).

This sequence belongs to the universal ribosomal protein uL24 family. In terms of assembly, part of the 50S ribosomal subunit.

In terms of biological role, one of two assembly initiator proteins, it binds directly to the 5'-end of the 23S rRNA, where it nucleates assembly of the 50S subunit. One of the proteins that surrounds the polypeptide exit tunnel on the outside of the subunit. This chain is Large ribosomal subunit protein uL24, found in Renibacterium salmoninarum (strain ATCC 33209 / DSM 20767 / JCM 11484 / NBRC 15589 / NCIMB 2235).